Consider the following 554-residue polypeptide: Sesquiterpene synthase 14a (554 aa).

4 residues coordinate Mg(2+): D305, D309, D449, and E457. Residues 305–309 carry the DDXXD motif motif; the sequence is DDLYD.

Belongs to the terpene synthase family. Tpsa subfamily. Mg(2+) is required as a cofactor. The cofactor is Mn(2+). Mostly expressed in stem trichomes.

It carries out the reaction (2E,6E)-farnesyl diphosphate = beta-bisabolene + diphosphate. The catalysed reaction is (2E,6E)-farnesyl diphosphate = (Z)-alpha-bisabolene + diphosphate. It catalyses the reaction (2E,6E)-farnesyl diphosphate = beta-acoradiene + diphosphate. The enzyme catalyses (2E,6E)-farnesyl diphosphate = (E)-gamma-bisabolene + diphosphate. It carries out the reaction (2E,6E)-farnesyl diphosphate = (E)-beta-farnesene + diphosphate. The catalysed reaction is (2E,6E)-farnesyl diphosphate = (Z)-beta-farnesene + diphosphate. It catalyses the reaction (2E)-geranyl diphosphate = limonene + diphosphate. The enzyme catalyses (2E)-geranyl diphosphate = beta-myrcene + diphosphate. It functions in the pathway secondary metabolite biosynthesis; terpenoid biosynthesis. In terms of biological role, sesquiterpene synthase involved in the biosynthesis of volatile compounds. Mediates the conversion of (2E,6E)-farnesyl diphosphate ((EE)-FPP) into beta-bisabolene, beta-farnesene, (E)-gamma-bisabolene, beta-acoradiene, selinene and (Z)-alpha-bisabolene. Low or no activity with (2Z,6Z)-farnesyl diphosphate ((ZZ)-FPP). Can act with a low efficiency as a monoterpene synthase with geranyl diphosphate (GPP) as substrate, thus producing beta-myrcene and limonene. This chain is Sesquiterpene synthase 14a, found in Solanum habrochaites (Wild tomato).